We begin with the raw amino-acid sequence, 1948 residues long: Receptor-type tyrosine-protein phosphatase S (1948 aa).

Positions 1 to 29 (MAPTWGPGMVSVVGPMGLLVVLLVGGCAA) are cleaved as a signal peptide. Residues 30-1282 (EEPPRFIKEP…PQPIVDGEEG (1253 aa)) lie on the Extracellular side of the membrane. Ig-like C2-type domains follow at residues 33 to 123 (PRFI…AKLT), 135 to 233 (PNID…ANLY), and 245 to 327 (PRFS…AQIT). 2 cysteine pairs are disulfide-bonded: cysteine 54–cysteine 107 and cysteine 156–cysteine 216. Residues 68-72 (KKGKK) form an important for binding to glycosaminoglycan chains region. N-linked (GlcNAc...) asparagine glycans are attached at residues asparagine 263 and asparagine 308. The cysteines at positions 266 and 311 are disulfide-linked. Fibronectin type-III domains are found at residues 334–424 (APGT…TGEQ), 429–523 (APRN…TQQG), 527–616 (QPMN…TLQS), 621–718 (PPQD…TDED), 723–831 (PPRK…TKGA), 832–930 (VLGR…TPRG), 931–1033 (HPQI…FLRD), and 1036–1120 (SPKN…TAFN). Residues 700–724 (TEVGPGPESSPVVVRTDEDVPSAPP) are disordered. Over residues 701–713 (EVGPGPESSPVVV) the composition is skewed to low complexity. Residue asparagine 733 is glycosylated (N-linked (GlcNAc...) asparagine). Asparagine 940 carries an N-linked (GlcNAc...) asparagine glycan. A helical membrane pass occupies residues 1283–1303 (LIWVIGPVLAVVFIICIVIAI). Residues 1304-1948 (LLYKNKPDSK…YLGSFDHYAT (645 aa)) are Cytoplasmic-facing. Basic and acidic residues-rich tracts occupy residues 1311 to 1321 (DSKRKDSEPRT) and 1331 to 1340 (APHHPKDPVE). The tract at residues 1311-1340 (DSKRKDSEPRTKCLLNNADLAPHHPKDPVE) is disordered. 2 Tyrosine-protein phosphatase domains span residues 1393–1648 (LSQE…LLEA) and 1680–1939 (MELE…ALEY). Residues aspartate 1557, 1589-1595 (CSAGVGR), and glutamine 1633 each bind substrate. The Phosphocysteine intermediate role is filled by cysteine 1589. The Phosphocysteine intermediate role is filled by cysteine 1880.

The protein belongs to the protein-tyrosine phosphatase family. Receptor class 2A subfamily. As to quaternary structure, binding to large heparan sulfate proteoglycan structures promotes oligomerization. Binding to chondroitin sulfate proteoglycan does not lead to oligomerization. Interacts (via Ig-like domains) with NTRK3. Interacts (via Ig-like domains) with NTRK1, but does not form detectable complexes with NTRK2. Interacts with PPFIA1, PPFIA2 and PPFIA3. In terms of processing, a cleavage occurs, separating the extracellular domain from the transmembrane segment. This process called 'ectodomain shedding' is thought to be involved in receptor desensitization, signal transduction and/or membrane localization. In terms of tissue distribution, detected in peripheral blood plasmacytoid dendritic cells (at protein level). Detected in all tissues tested except for placenta and liver. Detected in peripheral blood plasmacytoid dendritic cells.

It localises to the cell membrane. The protein localises to the cell projection. The protein resides in the axon. It is found in the perikaryon. Its subcellular location is the cytoplasmic vesicle. It localises to the secretory vesicle. The protein localises to the synaptic vesicle membrane. The protein resides in the synapse. It is found in the synaptosome. Its subcellular location is the postsynaptic density. It localises to the neuron projection. The protein localises to the growth cone. The catalysed reaction is O-phospho-L-tyrosyl-[protein] + H2O = L-tyrosyl-[protein] + phosphate. Functionally, cell surface receptor that binds to glycosaminoglycans, including chondroitin sulfate proteoglycans and heparan sulfate proteoglycan. Binding to chondroitin sulfate and heparan sulfate proteoglycans has opposite effects on PTPRS oligomerization and regulation of neurite outgrowth. Contributes to the inhibition of neurite and axonal outgrowth by chondroitin sulfate proteoglycans, also after nerve transection. Plays a role in stimulating neurite outgrowth in response to the heparan sulfate proteoglycan GPC2. Required for normal brain development, especially for normal development of the pituitary gland and the olfactory bulb. Functions as a tyrosine phosphatase. Mediates dephosphorylation of NTRK1, NTRK2 and NTRK3. Plays a role in down-regulation of signaling cascades that lead to the activation of Akt and MAP kinases. Down-regulates TLR9-mediated activation of NF-kappa-B, as well as production of TNF, interferon alpha and interferon beta. This chain is Receptor-type tyrosine-protein phosphatase S (PTPRS), found in Homo sapiens (Human).